The chain runs to 187 residues: Ribulose bisphosphate carboxylase small subunit, chloroplastic (187 aa).

The N-terminal 56 residues, 1 to 56 (MASSVMSTATVATGANAAQASMIASFNGLKSAASFPVTRKQDLDITSIASNGGRVE), are a transit peptide targeting the chloroplast.

Belongs to the RuBisCO small chain family. As to quaternary structure, heterohexadecamer of 8 large and 8 small subunits.

It is found in the plastid. Its subcellular location is the chloroplast. Functionally, ruBisCO catalyzes two reactions: the carboxylation of D-ribulose 1,5-bisphosphate, the primary event in carbon dioxide fixation, as well as the oxidative fragmentation of the pentose substrate. Both reactions occur simultaneously and in competition at the same active site. Although the small subunit is not catalytic it is essential for maximal activity. This is Ribulose bisphosphate carboxylase small subunit, chloroplastic from Capsicum annuum (Capsicum pepper).